The chain runs to 294 residues: MPSLKDLKNRIASVKATQKITKAMKMVAAAKLRRAQEAAEAARPYSQRMGAVLANIAKAVTDADGAPTLMTGTGQDQVHLLVVCTAERGLCGGFNSQIARFAREHVRKLVAEGKTVKIFTVGKKGYDILRREFASLIIERKELRDVKRVGFENADQIGKRIIEMYAAGEFDVCTLFYSEFKSVISQIPTAQRLIPASAEAVQAEDAEHAGAVYEYEPDPASILEDLIPRNISVQIFRALLENVAGEMGAKMSAMDNATRNAGEMINKLTLSYNRQRQAQITKELIEIISGAEAL.

This sequence belongs to the ATPase gamma chain family. F-type ATPases have 2 components, CF(1) - the catalytic core - and CF(0) - the membrane proton channel. CF(1) has five subunits: alpha(3), beta(3), gamma(1), delta(1), epsilon(1). CF(0) has three main subunits: a, b and c.

The protein localises to the cell inner membrane. In terms of biological role, produces ATP from ADP in the presence of a proton gradient across the membrane. The gamma chain is believed to be important in regulating ATPase activity and the flow of protons through the CF(0) complex. This Rhizobium johnstonii (strain DSM 114642 / LMG 32736 / 3841) (Rhizobium leguminosarum bv. viciae) protein is ATP synthase gamma chain.